The chain runs to 326 residues: Ornithine carbamoyltransferase (326 aa).

Residues 54 to 57, Gln-81, Arg-105, and 132 to 135 contribute to the carbamoyl phosphate site; these read STRT and HPTQ. Residues Asn-164, Asp-225, and 229-230 each bind L-ornithine; that span reads SM. Residues 266–267 and Arg-311 contribute to the carbamoyl phosphate site; that span reads CL.

This sequence belongs to the aspartate/ornithine carbamoyltransferase superfamily. OTCase family.

It localises to the cytoplasm. It carries out the reaction carbamoyl phosphate + L-ornithine = L-citrulline + phosphate + H(+). The protein operates within amino-acid biosynthesis; L-arginine biosynthesis; L-arginine from L-ornithine and carbamoyl phosphate: step 1/3. Its function is as follows. Reversibly catalyzes the transfer of the carbamoyl group from carbamoyl phosphate (CP) to the N(epsilon) atom of ornithine (ORN) to produce L-citrulline. This Streptococcus mutans serotype c (strain ATCC 700610 / UA159) protein is Ornithine carbamoyltransferase (argF).